A 211-amino-acid polypeptide reads, in one-letter code: Protein-methionine-sulfoxide reductase heme-binding subunit MsrQ (211 aa).

A run of 6 helical transmembrane segments spans residues 10-30 (WLKV…VWAI), 54-74 (FLLA…PLLI), 82-102 (LWCF…ELGV), 116-136 (PYLT…FTST), 153-173 (FVYL…KIIS), and 178-198 (IYAG…LSLF).

The protein belongs to the MsrQ family. In terms of assembly, heterodimer of a catalytic subunit (MsrP) and a heme-binding subunit (MsrQ). FMN is required as a cofactor. It depends on heme b as a cofactor.

It is found in the cell inner membrane. In terms of biological role, part of the MsrPQ system that repairs oxidized periplasmic proteins containing methionine sulfoxide residues (Met-O), using respiratory chain electrons. Thus protects these proteins from oxidative-stress damage caused by reactive species of oxygen and chlorine generated by the host defense mechanisms. MsrPQ is essential for the maintenance of envelope integrity under bleach stress, rescuing a wide series of structurally unrelated periplasmic proteins from methionine oxidation, including the primary periplasmic chaperone SurA and the lipoprotein Pal. MsrQ provides electrons for reduction to the reductase catalytic subunit MsrP, using the quinone pool of the respiratory chain. The sequence is that of Protein-methionine-sulfoxide reductase heme-binding subunit MsrQ from Escherichia coli O6:H1 (strain CFT073 / ATCC 700928 / UPEC).